Reading from the N-terminus, the 1923-residue chain is Callose synthase 5 (1923 aa).

The span at 1–10 shows a compositional bias: polar residues; it reads MAQSSTSHDS. Residues 1–22 form a disordered region; sequence MAQSSTSHDSGPQGLMRRPSRS. At 1-481 the chain is on the cytoplasmic side; sequence MAQSSTSHDS…ETRTFWHIYH (481 aa). A helical membrane pass occupies residues 482–502; it reads SFDRLWTFYLLALQAMIILAF. The Extracellular segment spans residues 503–521; it reads ERVELREILRKDVLYALSS. Residues 522 to 542 form a helical membrane-spanning segment; sequence IFITAAFLRFLQSVLDVILNF. The Cytoplasmic portion of the chain corresponds to 543–559; it reads PGFHRWKFTDVLRNILK. The chain crosses the membrane as a helical span at residues 560 to 580; sequence IVVSLAWCVVLPLCYAQSVSF. Residues 581 to 601 lie on the Extracellular side of the membrane; that stretch reads APGKLKQWLSFLPQVKGVPPL. Residues 602–622 traverse the membrane as a helical segment; sequence YIMAVALYLLPNVLAAIMFIF. Topologically, residues 623-658 are cytoplasmic; that stretch reads PMLRRWIENSDWHIFRLLLWWSQPRIYVGRGMHESQ. Residues 659–679 form a helical membrane-spanning segment; that stretch reads IALIKYTIFWLLLFCCKFAFS. Residues 680–719 lie on the Extracellular side of the membrane; that stretch reads YFLQVKLLVKPTNAIMSIRHVKYKWHEFFPNAEHNYGAVV. A helical transmembrane segment spans residues 720-740; that stretch reads SLWLPVILVYFMDTQIWYAIF. Residues 741–1486 lie on the Cytoplasmic side of the membrane; sequence STICGGVIGA…FDFFRMMSCY (746 aa). The chain crosses the membrane as a helical span at residues 1487–1507; the sequence is FTTVGFYISSMIVVLTVYAFL. Over 1508–1535 the chain is Extracellular; that stretch reads YGRLYLSLSGVEEAIVKFAAAKGDSSLK. The helical transmembrane segment at 1536–1556 threads the bilayer; sequence AAMASQSVVQLGLLMTLPMVM. The Cytoplasmic portion of the chain corresponds to 1557–1566; that stretch reads EIGLERGFRT. Residues 1567-1587 traverse the membrane as a helical segment; sequence ALSDLIIMQLQLAPVFFTFSL. Residues 1588-1630 are Extracellular-facing; it reads GTKVHYYGRTILHGGSKYRATGRGFVVKHEKFAENYRMYSRSH. A helical transmembrane segment spans residues 1631–1651; the sequence is FVKGMELMVLLICYRIYGKAA. Over 1652-1657 the chain is Cytoplasmic; the sequence is EDSVGY. A helical membrane pass occupies residues 1658-1678; sequence ALVMGSTWFLVGSWLFAPFFF. The Extracellular segment spans residues 1679-1732; that stretch reads NPSGFEWQKIVDDWDDWNKWISSRGGIGVPANKSWESWWEEEQEHLLHSGFFGK. Residue Asn1710 is glycosylated (N-linked (GlcNAc...) asparagine). Residues 1733–1755 form a helical membrane-spanning segment; sequence FWEIFLSLRYFIYQYGIVYQLNL. The Cytoplasmic segment spans residues 1756–1766; it reads TKESRMGKQHS. The helical transmembrane segment at 1767–1787 threads the bilayer; the sequence is IIVYGLSWLVIVAVMIVLKIV. The Extracellular segment spans residues 1788 to 1803; the sequence is SMGRKKFSADFQLMFR. The helical transmembrane segment at 1804 to 1824 threads the bilayer; that stretch reads LLKLFLFIGSVVIVGMLFHFL. Position 1825 (Lys1825) is a topological domain, cytoplasmic. Residues 1826–1846 form a helical membrane-spanning segment; that stretch reads LTVGDIMQSLLAFLPTGWALL. The Extracellular portion of the chain corresponds to 1847–1873; that stretch reads QISQVARPLMKTVGMWGSVKALARGYE. The chain crosses the membrane as a helical span at residues 1874–1894; that stretch reads YIMGVVIFMPVTVLAWFPFVS. The Cytoplasmic segment spans residues 1895–1923; sequence EFQTRLLFNQAFSRGLQIQRILAGGKKQK.

Belongs to the glycosyltransferase 48 family.

It localises to the cell membrane. The enzyme catalyses [(1-&gt;3)-beta-D-glucosyl](n) + UDP-alpha-D-glucose = [(1-&gt;3)-beta-D-glucosyl](n+1) + UDP + H(+). In terms of biological role, required for the formation of the callose wall separating the tetraspores (interstitial wall) and surrounding the pollen mother cells (peripheral wall). Required for exine formation on pollen wall. May be involved in callose synthesis during pollen tube growth. During plant growth and development, callose is found as a transitory component of the cell plate in dividing cells, is a major component of pollen mother cell walls and pollen tubes, and is found as a structural component of plasmodesmatal canals. The polypeptide is Callose synthase 5 (CALS5) (Arabidopsis thaliana (Mouse-ear cress)).